The sequence spans 574 residues: Aspartate--tRNA ligase (574 aa).

L-aspartate is bound at residue Glu169. The tract at residues Gln193 to Lys196 is aspartate. Arg215 serves as a coordination point for L-aspartate. Residues Arg215–Glu217 and Gln224 each bind ATP. L-aspartate is bound at residue His437. Glu471 is a binding site for ATP. An L-aspartate-binding site is contributed by Arg478. Gly523–Arg526 contributes to the ATP binding site.

The protein belongs to the class-II aminoacyl-tRNA synthetase family. Type 1 subfamily. As to quaternary structure, homodimer.

It is found in the cytoplasm. The enzyme catalyses tRNA(Asp) + L-aspartate + ATP = L-aspartyl-tRNA(Asp) + AMP + diphosphate. Functionally, catalyzes the attachment of L-aspartate to tRNA(Asp) in a two-step reaction: L-aspartate is first activated by ATP to form Asp-AMP and then transferred to the acceptor end of tRNA(Asp). This is Aspartate--tRNA ligase from Mycoplasma mycoides subsp. mycoides SC (strain CCUG 32753 / NCTC 10114 / PG1).